The following is a 328-amino-acid chain: Gonadotropin-releasing hormone receptor (328 aa).

Topologically, residues 1-38 (MANSDSPEQNENHCSAINSSIPLTPGSLPTLTLSGKIR) are extracellular. Asn-18 carries N-linked (GlcNAc...) asparagine glycosylation. A helical transmembrane segment spans residues 39–58 (VTVTFFLFLLSTIFNTSFLL). Residues 59–77 (KLQNWTQRKEKRKKLSRMK) are Cytoplasmic-facing. A helical membrane pass occupies residues 78 to 97 (LLLKHLTLANLLETLIVMPL). The Extracellular portion of the chain corresponds to 98–115 (DGMWNITVQWYAGELLCK). Asn-102 carries N-linked (GlcNAc...) asparagine glycosylation. An intrachain disulfide couples Cys-114 to Cys-196. Residues 116–137 (VLSYLKLFSMYAPAFMMVVISL) traverse the membrane as a helical segment. Residues 138–164 (DRSLAITKPLAVKSNSKLGQFMIGLAW) are Cytoplasmic-facing. Residues 165–184 (LLSSIFAGPQLYIFGMIHLA) traverse the membrane as a helical segment. Residues 185–212 (DDSGQTEGFSQCVTHCSFPQWWHQAFYN) lie on the Extracellular side of the membrane. The helical transmembrane segment at 213–232 (FFTFSCLFIIPLLIMVICNA) threads the bilayer. The Cytoplasmic portion of the chain corresponds to 233 to 281 (KIIFTLTRVLHQDPHKLQLNQSKNNIPRARLRTLKMTVAFATSFTVCWT). The helical transmembrane segment at 282-300 (PYYVLGIWYWFDPDMVNRV) threads the bilayer. Over 301–306 (SDPVNH) the chain is Extracellular. Residues 307-326 (FFFLFAFLNPCFDPLIYGYF) traverse the membrane as a helical segment. The Cytoplasmic segment spans residues 327 to 328 (SL).

It belongs to the G-protein coupled receptor 1 family.

It localises to the cell membrane. Functionally, receptor for gonadotropin releasing hormone (GnRH) that mediates the action of GnRH to stimulate the secretion of the gonadotropic hormones luteinizing hormone (LH) and follicle-stimulating hormone (FSH). This receptor mediates its action by association with G-proteins that activate a phosphatidylinositol-calcium second messenger system. In Bos taurus (Bovine), this protein is Gonadotropin-releasing hormone receptor (GNRHR).